The chain runs to 132 residues: Large-conductance mechanosensitive channel (132 aa).

A run of 3 helical transmembrane segments spans residues 14-34 (VIDL…VSSL), 38-58 (IITP…LKIT), and 69-89 (FIQT…FVKV).

It belongs to the MscL family. As to quaternary structure, homopentamer.

The protein localises to the cell membrane. Functionally, channel that opens in response to stretch forces in the membrane lipid bilayer. May participate in the regulation of osmotic pressure changes within the cell. This Bacillus thuringiensis (strain Al Hakam) protein is Large-conductance mechanosensitive channel.